The chain runs to 213 residues: 3-demethoxyubiquinol 3-hydroxylase (213 aa).

The Fe cation site is built by glutamate 62, glutamate 92, histidine 95, glutamate 144, glutamate 176, and histidine 179.

Belongs to the COQ7 family. It depends on Fe cation as a cofactor.

The protein localises to the cell membrane. It catalyses the reaction a 5-methoxy-2-methyl-3-(all-trans-polyprenyl)benzene-1,4-diol + AH2 + O2 = a 3-demethylubiquinol + A + H2O. It functions in the pathway cofactor biosynthesis; ubiquinone biosynthesis. Functionally, catalyzes the hydroxylation of 2-nonaprenyl-3-methyl-6-methoxy-1,4-benzoquinol during ubiquinone biosynthesis. The protein is 3-demethoxyubiquinol 3-hydroxylase of Legionella pneumophila subsp. pneumophila (strain Philadelphia 1 / ATCC 33152 / DSM 7513).